The following is a 167-amino-acid chain: NADH-quinone oxidoreductase subunit B (167 aa).

Cys-48, Cys-49, Cys-113, and Cys-143 together coordinate [4Fe-4S] cluster.

This sequence belongs to the complex I 20 kDa subunit family. As to quaternary structure, NDH-1 is composed of 14 different subunits. Subunits NuoB, C, D, E, F, and G constitute the peripheral sector of the complex. It depends on [4Fe-4S] cluster as a cofactor.

The protein localises to the cell membrane. It catalyses the reaction a quinone + NADH + 5 H(+)(in) = a quinol + NAD(+) + 4 H(+)(out). In terms of biological role, NDH-1 shuttles electrons from NADH, via FMN and iron-sulfur (Fe-S) centers, to quinones in the respiratory chain. Couples the redox reaction to proton translocation (for every two electrons transferred, four hydrogen ions are translocated across the cytoplasmic membrane), and thus conserves the redox energy in a proton gradient. This Wolbachia pipientis subsp. Culex pipiens (strain wPip) protein is NADH-quinone oxidoreductase subunit B.